A 110-amino-acid polypeptide reads, in one-letter code: Glutaredoxin-1 (110 aa).

One can recognise a Glutaredoxin domain in the interval 7 to 110 (IKHVKDLIAE…EELLEPILAN (104 aa)). Lys-11 participates in a covalent cross-link: Glycyl lysine isopeptide (Lys-Gly) (interchain with G-Cter in ubiquitin). Residues 24 to 29 (KTYCPY), Gln-63, Val-75, and 88 to 89 (ND) contribute to the glutathione site. An S-glutathionyl cysteine; alternate modification is found at Cys-27. A disulfide bond links Cys-27 and Cys-30.

This sequence belongs to the glutaredoxin family.

The protein resides in the cytoplasm. It localises to the nucleus. It carries out the reaction 2 glutathione + H2O2 = glutathione disulfide + 2 H2O. The enzyme catalyses 1-chloro-2,4-dinitrobenzene + glutathione = 2,4-dinitrophenyl-S-glutathione + chloride + H(+). It catalyses the reaction RX + glutathione = an S-substituted glutathione + a halide anion + H(+). Its function is as follows. Component of the glutathione system which performs several activities such as glutathione-dependent oxidoreductase, glutathione peroxidase and glutathione S-transferase (GST) activity. The disulfide bond functions as an electron carrier in the glutathione-dependent synthesis of deoxyribonucleotides by the enzyme ribonucleotide reductase. In addition, it is also involved in reducing cytosolic protein- and non-protein-disulfides in a coupled system with glutathione reductase. Required for resistance to reactive oxygen species (ROS) by directly reducing hydroperoxides and for the detoxification of ROS-mediated damage. GRX1 is less active as an oxidoreductase than GRX2. The sequence is that of Glutaredoxin-1 (GRX1) from Saccharomyces cerevisiae (strain ATCC 204508 / S288c) (Baker's yeast).